Reading from the N-terminus, the 299-residue chain is N-acetylmuramic acid 6-phosphate etherase (299 aa).

The 164-residue stretch at 54 to 217 (TIAQYKKGGR…STITMVGVGK (164 aa)) folds into the SIS domain. Glu82 functions as the Proton donor in the catalytic mechanism. Glu113 is an active-site residue.

Belongs to the GCKR-like family. MurNAc-6-P etherase subfamily. Homodimer.

The enzyme catalyses N-acetyl-D-muramate 6-phosphate + H2O = N-acetyl-D-glucosamine 6-phosphate + (R)-lactate. It functions in the pathway amino-sugar metabolism; N-acetylmuramate degradation. Its function is as follows. Specifically catalyzes the cleavage of the D-lactyl ether substituent of MurNAc 6-phosphate, producing GlcNAc 6-phosphate and D-lactate. This is N-acetylmuramic acid 6-phosphate etherase from Staphylococcus aureus (strain bovine RF122 / ET3-1).